The following is a 467-amino-acid chain: Fumarate hydratase class II (467 aa).

Substrate-binding positions include 98–100 (SGT), Arg-126, 129–132 (HPND), 139–141 (SSN), and Thr-187. His-188 acts as the Proton donor/acceptor in catalysis. Residue Ser-318 is part of the active site. Substrate is bound by residues Ser-319 and 324–326 (KVN).

This sequence belongs to the class-II fumarase/aspartase family. Fumarase subfamily. As to quaternary structure, homotetramer.

It is found in the cytoplasm. The enzyme catalyses (S)-malate = fumarate + H2O. It functions in the pathway carbohydrate metabolism; tricarboxylic acid cycle; (S)-malate from fumarate: step 1/1. Functionally, involved in the TCA cycle. Catalyzes the stereospecific interconversion of fumarate to L-malate. The sequence is that of Fumarate hydratase class II from Shigella flexneri.